A 391-amino-acid polypeptide reads, in one-letter code: NADH-quinone oxidoreductase subunit D (391 aa).

The protein belongs to the complex I 49 kDa subunit family. In terms of assembly, NDH-1 is composed of 14 different subunits. Subunits NuoB, C, D, E, F, and G constitute the peripheral sector of the complex.

It localises to the cell inner membrane. The enzyme catalyses a quinone + NADH + 5 H(+)(in) = a quinol + NAD(+) + 4 H(+)(out). NDH-1 shuttles electrons from NADH, via FMN and iron-sulfur (Fe-S) centers, to quinones in the respiratory chain. The immediate electron acceptor for the enzyme in this species is believed to be ubiquinone. Couples the redox reaction to proton translocation (for every two electrons transferred, four hydrogen ions are translocated across the cytoplasmic membrane), and thus conserves the redox energy in a proton gradient. This is NADH-quinone oxidoreductase subunit D from Rickettsia felis (strain ATCC VR-1525 / URRWXCal2) (Rickettsia azadi).